Consider the following 433-residue polypeptide: Poly(A) ribonuclease POP2 (433 aa).

Met-1 carries the N-acetylmethionine modification. A disordered region spans residues 78 to 98 (LLTQQQQQQQQQQQPFNIGTP). The span at 81 to 91 (QQQQQQQQQQQ) shows a compositional bias: low complexity. Thr-97 carries the phosphothreonine; by YAK1 modification. Positions 188, 190, 310, and 394 each coordinate a divalent metal cation.

It belongs to the CAF1 family. In terms of assembly, subunit of the 1.0 MDa CCR4-NOT core complex that contains CCR4, CAF1, NOT1, NOT2, NOT3, NOT4, NOT5, CAF40 and CAF130. In the complex interacts with NOT1. The core complex probably is part of a less characterized 1.9 MDa CCR4-NOT complex. Mg(2+) serves as cofactor.

The protein localises to the cytoplasm. The protein resides in the nucleus. The enzyme catalyses Exonucleolytic cleavage of poly(A) to 5'-AMP.. Functionally, acts as a probably catalytic component of the CCR4-NOT core complex, which in the nucleus seems to be a general transcription factor, and in the cytoplasm the major mRNA deadenylase involved in mRNA turnover. In vitro, POP2 has 3'-exoribonuclease activity with a preference for poly(A) RNAs, but also degrades poly(U) and poly(C) RNAs. Is part of a glucose-sensing system involved in growth control in response to glucose availability. This is Poly(A) ribonuclease POP2 (POP2) from Saccharomyces cerevisiae (strain ATCC 204508 / S288c) (Baker's yeast).